Here is a 402-residue protein sequence, read N- to C-terminus: Exodeoxyribonuclease 7 large subunit (402 aa).

It belongs to the XseA family. In terms of assembly, heterooligomer composed of large and small subunits.

Its subcellular location is the cytoplasm. It catalyses the reaction Exonucleolytic cleavage in either 5'- to 3'- or 3'- to 5'-direction to yield nucleoside 5'-phosphates.. Its function is as follows. Bidirectionally degrades single-stranded DNA into large acid-insoluble oligonucleotides, which are then degraded further into small acid-soluble oligonucleotides. The protein is Exodeoxyribonuclease 7 large subunit of Streptomyces coelicolor (strain ATCC BAA-471 / A3(2) / M145).